A 362-amino-acid polypeptide reads, in one-letter code: Chorismate synthase (362 aa).

Arg46 is a binding site for NADP(+). Residues 121 to 123 (RAS), 237 to 238 (NA), Gly277, 292 to 296 (KPTPS), and Arg318 each bind FMN.

The protein belongs to the chorismate synthase family. Homotetramer. It depends on FMNH2 as a cofactor.

It carries out the reaction 5-O-(1-carboxyvinyl)-3-phosphoshikimate = chorismate + phosphate. The protein operates within metabolic intermediate biosynthesis; chorismate biosynthesis; chorismate from D-erythrose 4-phosphate and phosphoenolpyruvate: step 7/7. Catalyzes the anti-1,4-elimination of the C-3 phosphate and the C-6 proR hydrogen from 5-enolpyruvylshikimate-3-phosphate (EPSP) to yield chorismate, which is the branch point compound that serves as the starting substrate for the three terminal pathways of aromatic amino acid biosynthesis. This reaction introduces a second double bond into the aromatic ring system. The protein is Chorismate synthase of Campylobacter lari (strain RM2100 / D67 / ATCC BAA-1060).